We begin with the raw amino-acid sequence, 93 residues long: UPF0358 protein BPUM_1375 (93 aa).

This sequence belongs to the UPF0358 family.

The polypeptide is UPF0358 protein BPUM_1375 (Bacillus pumilus (strain SAFR-032)).